The following is a 505-amino-acid chain: Phase 1 flagellin (505 aa).

The protein belongs to the bacterial flagellin family.

The protein localises to the secreted. Its subcellular location is the bacterial flagellum. In terms of biological role, flagellin is the subunit protein which polymerizes to form the filaments of bacterial flagella. This is Phase 1 flagellin (fliC) from Salmonella naestved.